The following is a 221-amino-acid chain: Orotate phosphoribosyltransferase (221 aa).

Lys-26 contributes to the 5-phospho-alpha-D-ribose 1-diphosphate binding site. 34–35 provides a ligand contact to orotate; sequence FF. 5-phospho-alpha-D-ribose 1-diphosphate contacts are provided by residues 72 to 73, Arg-98, Lys-99, Lys-102, His-104, and 123 to 131; these read YK and DDVISAGTS. Orotate is bound by residues Ser-127 and Arg-155.

This sequence belongs to the purine/pyrimidine phosphoribosyltransferase family. PyrE subfamily. In terms of assembly, homodimer. Mg(2+) serves as cofactor.

The catalysed reaction is orotidine 5'-phosphate + diphosphate = orotate + 5-phospho-alpha-D-ribose 1-diphosphate. Its pathway is pyrimidine metabolism; UMP biosynthesis via de novo pathway; UMP from orotate: step 1/2. Its function is as follows. Catalyzes the transfer of a ribosyl phosphate group from 5-phosphoribose 1-diphosphate to orotate, leading to the formation of orotidine monophosphate (OMP). In Herminiimonas arsenicoxydans, this protein is Orotate phosphoribosyltransferase.